Consider the following 618-residue polypeptide: uncharacterized protein (618 aa).

To Rhizobium NGR234A y4qD.

This is an uncharacterized protein from Sinorhizobium fredii (strain NBRC 101917 / NGR234).